We begin with the raw amino-acid sequence, 238 residues long: Uridylate kinase (238 aa).

An ATP-binding site is contributed by 12–15 (KLSG). G54 provides a ligand contact to UMP. Residues G55 and R59 each coordinate ATP. Residues D74 and 135-142 (TGNPYFTT) each bind UMP. Residues T162, Y168, and D171 each contribute to the ATP site.

The protein belongs to the UMP kinase family. As to quaternary structure, homohexamer.

It is found in the cytoplasm. It carries out the reaction UMP + ATP = UDP + ADP. Its pathway is pyrimidine metabolism; CTP biosynthesis via de novo pathway; UDP from UMP (UMPK route): step 1/1. Its activity is regulated as follows. Inhibited by UTP. In terms of biological role, catalyzes the reversible phosphorylation of UMP to UDP. In Lawsonia intracellularis (strain PHE/MN1-00), this protein is Uridylate kinase.